The chain runs to 149 residues: Transcriptional repressor NrdR (149 aa).

The segment at Cys-3–Cys-34 is a zinc-finger region. The region spanning Pro-49–Glu-139 is the ATP-cone domain.

This sequence belongs to the NrdR family. Requires Zn(2+) as cofactor.

In terms of biological role, negatively regulates transcription of bacterial ribonucleotide reductase nrd genes and operons by binding to NrdR-boxes. The chain is Transcriptional repressor NrdR from Yersinia pseudotuberculosis serotype O:1b (strain IP 31758).